Consider the following 272-residue polypeptide: DNA repair protein RecO (272 aa).

Belongs to the RecO family.

Its function is as follows. Involved in DNA repair and RecF pathway recombination. This is DNA repair protein RecO from Limosilactobacillus fermentum (strain NBRC 3956 / LMG 18251) (Lactobacillus fermentum).